The sequence spans 416 residues: Transcription factor IIIB 50 kDa subunit (416 aa).

The segment at 3–36 (NGSRCPDCGSSELVEDSHYSQSQLVCSDCGCVVT) adopts a TFIIB-type zinc-finger fold. Residues cysteine 7, cysteine 10, cysteine 28, and cysteine 31 each coordinate Zn(2+). 2 repeat units span residues 72–157 (DLRR…MQIV) and 173–249 (VKSY…SLAR). An interaction with target DNA region spans residues 108 to 114 (AARLQKK). A disordered region spans residues 317-385 (AEVETKQQQP…TGDEDISDSE (69 aa)). Serine 350 bears the Phosphoserine mark. The interval 354–360 (LLPPCML) is required for the formation of a ternary complex with DNA and TBP; not required for interaction with TBP in the absence of DNA. The residue at position 358 (cysteine 358) is a Cysteine sulfenic acid (-SOH). Residues 362–416 (PPKRTHTMPPDSVVTGDEDISDSEIEQYLRTPQEVRDFERAQAASRAAMSVPNPP) form a required for interaction with TBP and formation of a ternary complex with DNA and TBP region.

It belongs to the TFIIB family. As to quaternary structure, component of TFIIIB complexes. The TFIIIB complex has two activities, alpha and beta. The TFIIIB-alpha activity complex is composed of TBP, BDP1, and a complex containing both BRF2 and at least four stably associated proteins; this complex inhibits the transcription by pol III via its phosphorylation by CK2; YY1 facilitates the TFIIIB-alpha complex formation. Interacts with TBP; this interaction promotes recruitment of BRF2 to TATA box-containing promoters. Interacts with TBP and the BURE sequence (GC-rich sequence downstream from the TATA box) to form a strong ternary complex which is joined by BDP1; this ternary complex stimulates pol III transcription. Forms a trimeric complex composed of TBP, BRF2 and mini-SNAPc complex (SNAP43, SNAP50, and the N-terminal third of SNAP190) on the promoter. Assembly of the TBP-BRF2 complex is stimulated by SNAP190. Interacts with MAF1 and SNAPC4. In response to oxidative stress, Cys-358 is reversibly oxidized to cysteine sulfenic acid. Oxidation of Cys-358 impairs formation of a ternary complex with TBP and DNA and down-regulates expression of target genes in response to oxidative stress.

Its subcellular location is the nucleus. General activator of RNA polymerase III transcription. Factor exclusively required for RNA polymerase III transcription of genes with promoter elements upstream of the initiation sites. Contributes to the regulation of gene expression; functions as activator in the absence of oxidative stress. Down-regulates expression of target genes in response to oxidative stress. Overexpression protects cells against apoptosis in response to oxidative stress. The protein is Transcription factor IIIB 50 kDa subunit (Brf2) of Rattus norvegicus (Rat).